The primary structure comprises 255 residues: Pimeloyl-[acyl-carrier protein] methyl ester esterase (255 aa).

Substrate-binding positions include tryptophan 18, 78-79 (SL), and 139-143 (FLALD). Serine 78 functions as the Nucleophile in the catalytic mechanism. Residues aspartate 203 and histidine 233 contribute to the active site. Histidine 233 lines the substrate pocket.

It belongs to the AB hydrolase superfamily. Carboxylesterase BioH family. In terms of assembly, monomer.

Its subcellular location is the cytoplasm. The catalysed reaction is 6-carboxyhexanoyl-[ACP] methyl ester + H2O = 6-carboxyhexanoyl-[ACP] + methanol + H(+). Its pathway is cofactor biosynthesis; biotin biosynthesis. In terms of biological role, the physiological role of BioH is to remove the methyl group introduced by BioC when the pimeloyl moiety is complete. It allows to synthesize pimeloyl-ACP via the fatty acid synthetic pathway through the hydrolysis of the ester bonds of pimeloyl-ACP esters. The chain is Pimeloyl-[acyl-carrier protein] methyl ester esterase from Xylella fastidiosa (strain 9a5c).